The following is a 335-amino-acid chain: GTPase Obg (335 aa).

An Obg domain is found at 1 to 158; that stretch reads MFLDQITIEL…RQVELELKLI (158 aa). Residues 159 to 334 form the OBG-type G domain; the sequence is ADIGLVGFPN…LNSLFTNRLS (176 aa). Residues 165 to 172, 190 to 194, 215 to 218, 285 to 288, and 315 to 317 contribute to the GTP site; these read GFPNAGKS, FTTLQ, DIPG, NKID, and SGL. Ser-172 and Thr-192 together coordinate Mg(2+).

It belongs to the TRAFAC class OBG-HflX-like GTPase superfamily. OBG GTPase family. Monomer. It depends on Mg(2+) as a cofactor.

The protein resides in the cytoplasm. In terms of biological role, an essential GTPase which binds GTP, GDP and possibly (p)ppGpp with moderate affinity, with high nucleotide exchange rates and a fairly low GTP hydrolysis rate. Plays a role in control of the cell cycle, stress response, ribosome biogenesis and in those bacteria that undergo differentiation, in morphogenesis control. The protein is GTPase Obg of Chlamydia caviae (strain ATCC VR-813 / DSM 19441 / 03DC25 / GPIC) (Chlamydophila caviae).